The sequence spans 207 residues: Large ribosomal subunit protein uL4 (207 aa).

A disordered region spans residues 49-78; it reads HAVKNRSAVSGGGRKPWRQKGTGRARQGSI.

This sequence belongs to the universal ribosomal protein uL4 family. Part of the 50S ribosomal subunit.

In terms of biological role, one of the primary rRNA binding proteins, this protein initially binds near the 5'-end of the 23S rRNA. It is important during the early stages of 50S assembly. It makes multiple contacts with different domains of the 23S rRNA in the assembled 50S subunit and ribosome. Functionally, forms part of the polypeptide exit tunnel. In Streptococcus suis (strain 98HAH33), this protein is Large ribosomal subunit protein uL4.